The sequence spans 249 residues: Phosphate import ATP-binding protein PstB (249 aa).

An ABC transporter domain is found at 3-244 (IEANDVHVYY…PKKKRTQNYI (242 aa)). Position 35–42 (35–42 (GPSGCGKS)) interacts with ATP.

The protein belongs to the ABC transporter superfamily. Phosphate importer (TC 3.A.1.7) family. The complex is composed of two ATP-binding proteins (PstB), two transmembrane proteins (PstC and PstA) and a solute-binding protein (PstS).

It localises to the cell inner membrane. The enzyme catalyses phosphate(out) + ATP + H2O = ADP + 2 phosphate(in) + H(+). Its function is as follows. Part of the ABC transporter complex PstSACB involved in phosphate import. Responsible for energy coupling to the transport system. This chain is Phosphate import ATP-binding protein PstB, found in Cytophaga hutchinsonii (strain ATCC 33406 / DSM 1761 / CIP 103989 / NBRC 15051 / NCIMB 9469 / D465).